We begin with the raw amino-acid sequence, 318 residues long: 4-diphosphocytidyl-2-C-methyl-D-erythritol kinase (318 aa).

K13 is an active-site residue. Residue 101–111 (PVAGGMAGGSA) coordinates ATP. D143 is an active-site residue. The interval 298–318 (PGARLVTDDRADRPTPPQVHA) is disordered.

Belongs to the GHMP kinase family. IspE subfamily.

It catalyses the reaction 4-CDP-2-C-methyl-D-erythritol + ATP = 4-CDP-2-C-methyl-D-erythritol 2-phosphate + ADP + H(+). It functions in the pathway isoprenoid biosynthesis; isopentenyl diphosphate biosynthesis via DXP pathway; isopentenyl diphosphate from 1-deoxy-D-xylulose 5-phosphate: step 3/6. Catalyzes the phosphorylation of the position 2 hydroxy group of 4-diphosphocytidyl-2C-methyl-D-erythritol. This Saccharopolyspora erythraea (strain ATCC 11635 / DSM 40517 / JCM 4748 / NBRC 13426 / NCIMB 8594 / NRRL 2338) protein is 4-diphosphocytidyl-2-C-methyl-D-erythritol kinase.